The following is a 395-amino-acid chain: Imidazolonepropionase (395 aa).

The Fe(3+) site is built by H72 and H74. The Zn(2+) site is built by H72 and H74. 4-imidazolone-5-propanoate-binding residues include R81, Y144, and H174. Y144 lines the N-formimidoyl-L-glutamate pocket. Position 231 (H231) interacts with Fe(3+). H231 is a binding site for Zn(2+). E234 provides a ligand contact to 4-imidazolone-5-propanoate. Residue D306 coordinates Fe(3+). A Zn(2+)-binding site is contributed by D306.

It belongs to the metallo-dependent hydrolases superfamily. HutI family. Zn(2+) serves as cofactor. Fe(3+) is required as a cofactor.

Its subcellular location is the cytoplasm. It catalyses the reaction 4-imidazolone-5-propanoate + H2O = N-formimidoyl-L-glutamate. It participates in amino-acid degradation; L-histidine degradation into L-glutamate; N-formimidoyl-L-glutamate from L-histidine: step 3/3. Functionally, catalyzes the hydrolytic cleavage of the carbon-nitrogen bond in imidazolone-5-propanoate to yield N-formimidoyl-L-glutamate. It is the third step in the universal histidine degradation pathway. This Pyrobaculum arsenaticum (strain DSM 13514 / JCM 11321 / PZ6) protein is Imidazolonepropionase.